A 418-amino-acid polypeptide reads, in one-letter code: AP-3 complex subunit mu-2 (418 aa).

An MHD domain is found at 176 to 417; sequence NNEAYFDVIE…MTKAGKFQVR (242 aa).

It belongs to the adaptor complexes medium subunit family. As to quaternary structure, AP-3 associates with the BLOC-1 complex. Adaptor protein complex 3 (AP-3) is a heterotetramer composed of two large adaptins (delta-type subunit AP3D1 and beta-type subunit AP3B1 or AP3B2), a medium adaptin (mu-type subunit AP3M1 or AP3M2) and a small adaptin (sigma-type subunit APS1 or AP3S2).

The protein resides in the golgi apparatus. It is found in the cytoplasmic vesicle membrane. Its function is as follows. Part of the AP-3 complex, an adaptor-related complex which is not clathrin-associated. The complex is associated with the Golgi region as well as more peripheral structures. It facilitates the budding of vesicles from the Golgi membrane and may be directly involved in trafficking to lysosomes. In concert with the BLOC-1 complex, AP-3 is required to target cargos into vesicles assembled at cell bodies for delivery into neurites and nerve terminals. The protein is AP-3 complex subunit mu-2 (AP3M2) of Homo sapiens (Human).